The following is a 566-amino-acid chain: Pyrophosphate--fructose 6-phosphate 1-phosphotransferase subunit beta 1 (566 aa).

A Phosphoserine modification is found at serine 16. Glycine 105 provides a ligand contact to diphosphate. Aspartate 199 contributes to the Mg(2+) binding site. Residues 227–229 (TID), 266–267 (KY), 274–276 (MGR), glutamate 335, and 440–443 (YEGR) each bind substrate. The Proton acceptor role is filled by aspartate 229.

The protein belongs to the phosphofructokinase type A (PFKA) family. PPi-dependent PFK group II subfamily. Clade 'Long' sub-subfamily. Tetramer of two alpha (regulatory) and two beta (catalytic) chains. Requires Mg(2+) as cofactor.

Its subcellular location is the cytoplasm. It carries out the reaction beta-D-fructose 6-phosphate + diphosphate = beta-D-fructose 1,6-bisphosphate + phosphate + H(+). It functions in the pathway carbohydrate degradation; glycolysis; D-glyceraldehyde 3-phosphate and glycerone phosphate from D-glucose: step 3/4. Its activity is regulated as follows. Allosterically activated by fructose 2,6-bisphosphate. In terms of biological role, catalytic subunit of pyrophosphate--fructose 6-phosphate 1-phosphotransferase. Catalyzes the phosphorylation of D-fructose 6-phosphate, the first committing step of glycolysis. Uses inorganic phosphate (PPi) as phosphoryl donor instead of ATP like common ATP-dependent phosphofructokinases (ATP-PFKs), which renders the reaction reversible, and can thus function both in glycolysis and gluconeogenesis. The polypeptide is Pyrophosphate--fructose 6-phosphate 1-phosphotransferase subunit beta 1 (Arabidopsis thaliana (Mouse-ear cress)).